Here is a 128-residue protein sequence, read N- to C-terminus: MATLTIDEIVEAIKNMSVLEVAELVKRLEEEFGVSAAAMVAAAPAAGAAAGAPAQAEEKTEFDVILKSPGKNKIQVIKVVREITGLGLKEAKELVDNAPKPIKEGVPKEEAEQIKKKLEEAGAEVELK.

This sequence belongs to the bacterial ribosomal protein bL12 family. Homodimer. Part of the ribosomal stalk of the 50S ribosomal subunit. Forms a multimeric L10(L12)X complex, where L10 forms an elongated spine to which 2 to 4 L12 dimers bind in a sequential fashion. Binds GTP-bound translation factors.

Its function is as follows. Forms part of the ribosomal stalk which helps the ribosome interact with GTP-bound translation factors. Is thus essential for accurate translation. This Aquifex aeolicus (strain VF5) protein is Large ribosomal subunit protein bL12.